The chain runs to 497 residues: Uridine 5'-monophosphate synthase (497 aa).

An OPRTase region spans residues 8–226; sequence TRNGALKRNL…KLEINSELEN (219 aa). The domain linker stretch occupies residues 227–232; that stretch reads LSSLPY. The segment at 233-496 is OMPdecase; the sequence is VENVRTPLAE…WDALTRSDDS (264 aa). Residues Asp271 and 293-295 contribute to the UMP site; that span reads KLH. An orotidine 5'-phosphate-binding site is contributed by Lys293. Catalysis depends on for OMPdecase activity residues Asp324, Lys326, and Asp329. Orotidine 5'-phosphate-binding positions include Lys326, Asp329, Thr333, Ser387, 446–448, and 466–467; these read QQW and GR. UMP is bound by residues Asp329, Thr333, Ser387, 446–448, and 466–467; these read QQW and GR.

It in the N-terminal section; belongs to the purine/pyrimidine phosphoribosyltransferase family. This sequence in the C-terminal section; belongs to the OMP decarboxylase family. Expressed in intestine and in neurons near the nerve ring and rectum.

It localises to the cytoplasm. It catalyses the reaction orotidine 5'-phosphate + diphosphate = orotate + 5-phospho-alpha-D-ribose 1-diphosphate. The catalysed reaction is orotidine 5'-phosphate + H(+) = UMP + CO2. The protein operates within pyrimidine metabolism; UMP biosynthesis via de novo pathway; UMP from orotate: step 1/2. It participates in pyrimidine metabolism; UMP biosynthesis via de novo pathway; UMP from orotate: step 2/2. Its function is as follows. Bifunctional enzyme which catalyzes the formation of UMP from orotate in the de novo pathway of pyrimidine biosynthesis. May also form UMP from uracil. Regulates the size of gut granules during embryonic development. Involved in resistance to DNA damaging agents including UV-C and X-ray radiation. The protein is Uridine 5'-monophosphate synthase of Caenorhabditis elegans.